Consider the following 522-residue polypeptide: Sugar carrier protein A (522 aa).

At 1 to 22 (MAGGSLAPAGVAKERAEQYQGK) the chain is on the cytoplasmic side. Transmembrane regions (helical) follow at residues 23-43 (VTFA…IFGY), 87-107 (AFTS…GPIT), 121-141 (ISFL…MLLL), 144-164 (IMLG…LSEM), 173-193 (LNIM…MVNY), 205-225 (LSLG…LLLP), 286-306 (LVMA…IILF), 322-342 (ALYS…ISIA), 351-371 (FLLI…AIIL), 384-404 (SFSV…GWSW), 430-450 (AVNL…LCAF), and 453-473 (GIFL…YIFL). Residues 474–522 (PETKGVPIEEMIFLWRKHWFWKKIVPGQPEVDDSRESMEMGEAVASRIK) lie on the Cytoplasmic side of the membrane.

It belongs to the major facilitator superfamily. Sugar transporter (TC 2.A.1.1) family.

The protein resides in the membrane. The sequence is that of Sugar carrier protein A (STA) from Ricinus communis (Castor bean).